Here is a 260-residue protein sequence, read N- to C-terminus: HLA class II histocompatibility antigen, DP alpha 1 chain (260 aa).

A signal peptide spans 1-28 (MRPEDRMFHIRAVILRALSLAFLLSLRG). Residues 29–115 (AGAIKADHVS…QRSNHTQATN (87 aa)) form an alpha-1 region. At 29 to 222 (AGAIKADHVS…EPIQMPETTE (194 aa)) the chain is on the extracellular side. Residues N109 and N149 are each glycosylated (N-linked (GlcNAc...) asparagine). An alpha-2 region spans residues 116–209 (DPPEVTVFPK…GLDQPLLKHW (94 aa)). The Ig-like C1-type domain maps to 118–210 (PEVTVFPKEP…LDQPLLKHWE (93 aa)). C138 and C194 are joined by a disulfide. The interval 210–222 (EAQEPIQMPETTE) is connecting peptide. A helical membrane pass occupies residues 223 to 245 (TVLCALGLVLGLVGIIVGTVLII). Residues 246–260 (KSLRSGHDPRAQGTL) lie on the Cytoplasmic side of the membrane.

Belongs to the MHC class II family. As to quaternary structure, heterodimer of an alpha and a beta subunit; also referred as MHC class II molecule. In the endoplasmic reticulum (ER) it forms a heterononamer; 3 MHC class II molecules bind to a CD74 homotrimer (also known as invariant chain or HLA class II histocompatibility antigen gamma chain). In the endosomal/lysosomal system; CD74 undergoes sequential degradation by various proteases; leaving a small fragment termed CLIP on each MHC class II molecule. MHC class II molecule interacts with HLA_DM, and HLA_DO in B-cells, in order to release CLIP and facilitate the binding of antigenic peptides.

The protein resides in the cell membrane. It is found in the endoplasmic reticulum membrane. It localises to the golgi apparatus. Its subcellular location is the trans-Golgi network membrane. The protein localises to the endosome membrane. The protein resides in the lysosome membrane. Its function is as follows. Binds peptides derived from antigens that access the endocytic route of antigen presenting cells (APC) and presents them on the cell surface for recognition by the CD4 T-cells. The peptide binding cleft accommodates peptides of 10-30 residues. The peptides presented by MHC class II molecules are generated mostly by degradation of proteins that access the endocytic route, where they are processed by lysosomal proteases and other hydrolases. Exogenous antigens that have been endocytosed by the APC are thus readily available for presentation via MHC II molecules, and for this reason this antigen presentation pathway is usually referred to as exogenous. As membrane proteins on their way to degradation in lysosomes as part of their normal turn-over are also contained in the endosomal/lysosomal compartments, exogenous antigens must compete with those derived from endogenous components. Autophagy is also a source of endogenous peptides, autophagosomes constitutively fuse with MHC class II loading compartments. In addition to APCs, other cells of the gastrointestinal tract, such as epithelial cells, express MHC class II molecules and CD74 and act as APCs, which is an unusual trait of the GI tract. To produce a MHC class II molecule that presents an antigen, three MHC class II molecules (heterodimers of an alpha and a beta chain) associate with a CD74 trimer in the ER to form a heterononamer. Soon after the entry of this complex into the endosomal/lysosomal system where antigen processing occurs, CD74 undergoes a sequential degradation by various proteases, including CTSS and CTSL, leaving a small fragment termed CLIP (class-II-associated invariant chain peptide). The removal of CLIP is facilitated by HLA-DM via direct binding to the alpha-beta-CLIP complex so that CLIP is released. HLA-DM stabilizes MHC class II molecules until primary high affinity antigenic peptides are bound. The MHC II molecule bound to a peptide is then transported to the cell membrane surface. In B-cells, the interaction between HLA-DM and MHC class II molecules is regulated by HLA-DO. Primary dendritic cells (DCs) also to express HLA-DO. Lysosomal microenvironment has been implicated in the regulation of antigen loading into MHC II molecules, increased acidification produces increased proteolysis and efficient peptide loading. This is HLA class II histocompatibility antigen, DP alpha 1 chain (HLA-DPA1) from Homo sapiens (Human).